The primary structure comprises 642 residues: 1-deoxy-D-xylulose-5-phosphate synthase (642 aa).

Thiamine diphosphate is bound by residues histidine 79 and 120–122; that span reads AHS. Aspartate 151 contributes to the Mg(2+) binding site. Thiamine diphosphate contacts are provided by residues 152 to 153, asparagine 180, tyrosine 290, and glutamate 372; that span reads GS. Asparagine 180 provides a ligand contact to Mg(2+).

This sequence belongs to the transketolase family. DXPS subfamily. Homodimer. It depends on Mg(2+) as a cofactor. The cofactor is thiamine diphosphate.

The catalysed reaction is D-glyceraldehyde 3-phosphate + pyruvate + H(+) = 1-deoxy-D-xylulose 5-phosphate + CO2. The protein operates within metabolic intermediate biosynthesis; 1-deoxy-D-xylulose 5-phosphate biosynthesis; 1-deoxy-D-xylulose 5-phosphate from D-glyceraldehyde 3-phosphate and pyruvate: step 1/1. Catalyzes the acyloin condensation reaction between C atoms 2 and 3 of pyruvate and glyceraldehyde 3-phosphate to yield 1-deoxy-D-xylulose-5-phosphate (DXP). This Beijerinckia indica subsp. indica (strain ATCC 9039 / DSM 1715 / NCIMB 8712) protein is 1-deoxy-D-xylulose-5-phosphate synthase.